A 607-amino-acid polypeptide reads, in one-letter code: Rap1 GTPase-GDP dissociation stimulator 1-A (607 aa).

ARM repeat units follow at residues 79–118 (ELMRIPCVEAGLIPPLVQLLHSKDQEVLLQTGRALGNICY), 170–211 (DSLQ…NLAE), 347–390 (DGNC…NLAI), 391–431 (PVVN…MLID), and 479–519 (SKDV…LIAA).

Interacts with ralB. Probably interacts with the post-translationally isoprenylated (geranyl-geranylation) forms of ral proteins. Interacts with both GDP-bound and GTP-bound forms of ralA, but interaction is much stronger with ralA-GDP. As to expression, weakly expressed in adult tissues with highest levels found in spleen, kidney, skin and A6 cells.

The protein resides in the cytoplasm. It localises to the cytosol. It is found in the endoplasmic reticulum. The protein localises to the mitochondrion. Its function is as follows. Stimulates GDP/GTP exchange reaction of a group of small GTP-binding proteins (G proteins) including Rap1a/Rap1b, RhoA, RhoB and KRas, by stimulating the dissociation of GDP from and the subsequent binding of GTP to each small G protein. In Xenopus laevis (African clawed frog), this protein is Rap1 GTPase-GDP dissociation stimulator 1-A (rap1gds1-a).